The sequence spans 522 residues: F-box only protein 7 (522 aa).

Residues 1-87 form a ubiquitin-like region; sequence MKLRVRLQKR…EDAIAAPNLP (87 aa). The span at 88 to 132 shows a compositional bias: polar residues; it reads SSTVSEHSSVQNNDQPSLATSSSQSNIQDAQLHDSLQGQATQSEV. The interval 88-151 is disordered; the sequence is SSTVSEHSSV…GQHFEAEAVP (64 aa). Positions 91–128 are important for interaction with PINK1; that stretch reads VSEHSSVQNNDQPSLATSSSQSNIQDAQLHDSLQGQAT. The segment at 128–168 is important for interaction with CDK6; that stretch reads TQSEVWNDDSVSGPGQHFEAEAVPDVVDVEEGTGYYLAEPM. Positions 179-323 are important for dimerization and interaction with PSMF1; it reads PHSLEILYQS…PLLAFTRQAL (145 aa). Residues 328–374 form the F-box domain; that stretch reads VFGLVVLPLELKLRIFRLLDVRSVLSLSAVCRDLCITSNDQLLWRCL. The segment at 380–522 is important for interaction with CDK6; that stretch reads RDGSIRGRDT…WPTDSRLPFM (143 aa). An omega-N-methylarginine mark is found at arginine 431 and arginine 451. The short motif at 481–484 is the RFDP motif element; the sequence is RFDP. The segment at 484-522 is disordered; the sequence is PVGPLPGPNPILPGRGGPSDRFPLRPSRGWPTDSRLPFM. Asymmetric dimethylarginine is present on arginine 518.

Part of the SCF (SKP1-CUL1-F-box) E3 ubiquitin-protein ligase complex SCF(FBXO7) formed of CUL1, SKP1, RBX1 and FBXO7. Interacts via its C-terminal proline-rich region with DLGAP5. Interacts with BIRC2. Interacts with CDK6 and promotes its interaction with D-type cyclin. Interacts (via the N-terminal Ubl domain) with PRKN. Interacts (via N-terminal region) with PINK1. Interacts with PSMF1.

The protein resides in the cytoplasm. Its subcellular location is the nucleus. The protein localises to the mitochondrion. It localises to the cytosol. It participates in protein modification; protein ubiquitination. Functionally, substrate recognition component of a SCF (SKP1-CUL1-F-box protein) E3 ubiquitin-protein ligase complex which mediates the ubiquitination and subsequent proteasomal degradation of target proteins and plays a role in several biological processes such as cell cycle, cell proliferation, or maintenance of chromosome stability. Recognizes and ubiquitinates BIRC2 and the cell cycle regulator DLGAP5. Plays a role downstream of PINK1 in the clearance of damaged mitochondria via selective autophagy (mitophagy) by targeting PRKN to dysfunctional depolarized mitochondria. Promotes MFN1 ubiquitination. Mediates the ubiquitination and proteasomal degradation of UXT isoform 2, thereby impairing the NF-kappa-B signaling pathway. Inhibits NF-kappa-B pathway also by promoting the ubiquitinatioin of TRAF2. Affects the assembly state and activity of the proteasome in the cells including neurons by ubiquitinating the proteasomal subunit PSMA2 via 'Lys-63'-linked polyubiquitin chains. Promotes 'Lys-48'-linked polyubiquitination SIRT7, leading to the hydrogen peroxide-induced cell death. This chain is F-box only protein 7 (FBXO7), found in Bos taurus (Bovine).